A 480-amino-acid polypeptide reads, in one-letter code: O-acyltransferase ausP (480 aa).

Active-site proton acceptor residues include histidine 180 and aspartate 412.

Belongs to the plant acyltransferase family. As to quaternary structure, monomer.

It functions in the pathway secondary metabolite biosynthesis; terpenoid biosynthesis. O-acyltransferase; part of the gene cluster that mediates the biosynthesis of calidodehydroaustin, a fungal meroterpenoid. The first step of the pathway is the synthesis of 3,5-dimethylorsellinic acid by the polyketide synthase ausA. 3,5-dimethylorsellinic acid is then prenylated by the polyprenyl transferase ausN. Further epoxidation by the FAD-dependent monooxygenase ausM and cyclization by the probable terpene cyclase ausL lead to the formation of protoaustinoid A. Protoaustinoid A is then oxidized to spiro-lactone preaustinoid A3 by the combined action of the FAD-binding monooxygenases ausB and ausC, and the dioxygenase ausE. Acid-catalyzed keto-rearrangement and ring contraction of the tetraketide portion of preaustinoid A3 by ausJ lead to the formation of preaustinoid A4. The aldo-keto reductase ausK, with the help of ausH, is involved in the next step by transforming preaustinoid A4 into isoaustinone which is in turn hydroxylated by the P450 monooxygenase ausI to form austinolide. The cytochrome P450 monooxygenase ausG modifies austinolide to austinol. Austinol is further acetylated to austin by the O-acetyltransferase ausP, which spontaneously changes to dehydroaustin. The cytochrome P450 monooxygenase ausR then converts dehydroaustin is into 7-dehydrodehydroaustin. The hydroxylation catalyzed by ausR permits the O-acetyltransferase ausQ to add an additional acetyl group to the molecule, leading to the formation of acetoxydehydroaustin. The short chain dehydrogenase ausT catalyzes the reduction of the double bond present between carbon atoms 1 and 2 to convert 7-dehydrodehydroaustin into 1,2-dihydro-7-hydroxydehydroaustin. AusQ catalyzes not only an acetylation reaction but also the addition of the PKS ausV diketide product to 1,2-dihydro-7-hydroxydehydroaustin, forming precalidodehydroaustin. Finally, the iron/alpha-ketoglutarate-dependent dioxygenase converts precalidodehydroaustin into calidodehydroaustin. This chain is O-acyltransferase ausP, found in Aspergillus calidoustus.